The sequence spans 304 residues: CD-NTase-associated protein 6 (304 aa).

Position 75–80 (Gly-75–Ser-80) interacts with ATP.

It belongs to the AAA ATPase family. As to quaternary structure, oligomerizes. Homohexamer. Forms a 1:1:6 CdnD:Cap7:Cap6 complex.

Functionally, regulates complex assembly in a CBASS antivirus system. CBASS (cyclic oligonucleotide-based antiphage signaling system) provides immunity against bacteriophage. The CD-NTase protein synthesizes cyclic nucleotides in response to infection; these serve as specific second messenger signals. The signals activate a diverse range of effectors, leading to bacterial cell death and thus abortive phage infection. A type III-C(AAA) CBASS system. Its function is as follows. Prevents the CdnD:Cap7:Cap8 complex (also called CdnD:HORMA2:HORMA3) from synthesizing 2',3',3'-cyclic AMP-AMP-AMP (cAAA). Binds and disassembles an active CdnD:Cap7:Cap8 complex, inhibiting the complex's ability to synthesize cyclic nucleotide second messengers. An AAA+-ATPase remodeler, in the absence of foreign threat Cap6 probably maintains the Cap7 protein in an open, inactive state. Once activated (presumably by a bacteriophage protein) Cap7 binds to and activates its cognate CD-NTase (CdnD in this bacteria) to synthesize cAAA, a cyclic nucleotide second messenger. cAAA activates the NucC endonuclease which degrades all DNA in the infected cell, causing cell death and abortive phage infection. This is CD-NTase-associated protein 6 from Pseudomonas aeruginosa.